Reading from the N-terminus, the 215-residue chain is Cardiolipin synthase (CMP-forming) (215 aa).

5 consecutive transmembrane segments (helical) span residues 29 to 49, 60 to 80, 117 to 137, 158 to 178, and 179 to 199; these read IPNI…WLIL, GWAL…GKLA, LWLT…VGIL, LMYA…ASLA, and AVFG…AGVL.

Belongs to the CDP-alcohol phosphatidyltransferase class-I family. Requires a divalent metal cation as cofactor.

It is found in the cell membrane. The enzyme catalyses a CDP-1,2-diacyl-sn-glycerol + a 1,2-diacyl-sn-glycero-3-phospho-(1'-sn-glycerol) = a cardiolipin + CMP + H(+). Its function is as follows. Catalyzes the synthesis of cardiolipin (CL) (diphosphatidylglycerol) by specifically transferring a phosphatidyl group from CDP-diacylglycerol to phosphatidylglycerol (PG). In Streptomyces coelicolor (strain ATCC BAA-471 / A3(2) / M145), this protein is Cardiolipin synthase (CMP-forming).